Consider the following 292-residue polypeptide: 4-diphosphocytidyl-2-C-methyl-D-erythritol kinase (292 aa).

Residue lysine 20 is part of the active site. 103-113 (PMGGGIGGGSS) is an ATP binding site. The active site involves aspartate 145.

Belongs to the GHMP kinase family. IspE subfamily.

It carries out the reaction 4-CDP-2-C-methyl-D-erythritol + ATP = 4-CDP-2-C-methyl-D-erythritol 2-phosphate + ADP + H(+). Its pathway is isoprenoid biosynthesis; isopentenyl diphosphate biosynthesis via DXP pathway; isopentenyl diphosphate from 1-deoxy-D-xylulose 5-phosphate: step 3/6. Catalyzes the phosphorylation of the position 2 hydroxy group of 4-diphosphocytidyl-2C-methyl-D-erythritol. In Cupriavidus necator (strain ATCC 17699 / DSM 428 / KCTC 22496 / NCIMB 10442 / H16 / Stanier 337) (Ralstonia eutropha), this protein is 4-diphosphocytidyl-2-C-methyl-D-erythritol kinase.